The primary structure comprises 416 residues: Cotranscriptional regulator ARB2A (416 aa).

The first 18 residues, 1–18 (MSISLSSLILLPIWINMA), serve as a signal peptide directing secretion. Residues 208–247 (KPKIHVQSSSDSSDEPAEKRERKDKVSKETKKRRDFYEKY) are disordered. The segment covering 223–236 (PAEKRERKDKVSKE) has biased composition (basic and acidic residues). Catalysis depends on S293, which acts as the Nucleophile. The Prevents secretion from ER motif lies at 413-416 (HEEL).

Belongs to the ARB2A family. Interacts with AGO2. Found in a complex, composed of AGO2, CHD7 and ARB2A.

The protein resides in the nucleus. The protein localises to the cytoplasm. Its subcellular location is the endoplasmic reticulum. Its function is as follows. Plays a role in the regulation of alternative splicing, by interacting with AGO2 and CHD7. Seems to be required for stabilizing protein-protein interactions at the chromatin-spliceosome interface. May have hydrolase activity. In Homo sapiens (Human), this protein is Cotranscriptional regulator ARB2A.